Consider the following 264-residue polypeptide: Tryptophan synthase alpha chain (264 aa).

Catalysis depends on proton acceptor residues glutamate 44 and aspartate 55.

The protein belongs to the TrpA family. In terms of assembly, tetramer of two alpha and two beta chains.

The catalysed reaction is (1S,2R)-1-C-(indol-3-yl)glycerol 3-phosphate + L-serine = D-glyceraldehyde 3-phosphate + L-tryptophan + H2O. The protein operates within amino-acid biosynthesis; L-tryptophan biosynthesis; L-tryptophan from chorismate: step 5/5. In terms of biological role, the alpha subunit is responsible for the aldol cleavage of indoleglycerol phosphate to indole and glyceraldehyde 3-phosphate. The chain is Tryptophan synthase alpha chain from Lactiplantibacillus plantarum (strain ATCC BAA-793 / NCIMB 8826 / WCFS1) (Lactobacillus plantarum).